We begin with the raw amino-acid sequence, 354 residues long: AT-hook motif nuclear-localized protein 11 (354 aa).

Disordered stretches follow at residues 1-158 and 290-354; these read MDRR…MMPS and KREE…LMRG. Low complexity-rich tracts occupy residues 46–55 and 75–96; these read NSISPFGSNP and VDSS…PPSG. A Bipartite nuclear localization signal motif is present at residues 101–109; that stretch reads KRKRGRPRK. The a.T hook 1 DNA-binding region spans 101–113; the sequence is KRKRGRPRKYGQD. Low complexity predominate over residues 122–133; that stretch reads SPSISNVSPNSN. Positions 134 to 146 form a DNA-binding region, a.T hook 2; the sequence is KRGRGRPPGSGKK. The 144-residue stretch at 159–302 folds into the PPC domain; sequence STGMSFTPHV…ETSEDVQDTD (144 aa). Residues 294–303 are compositionally biased toward acidic residues; that stretch reads TSEDVQDTDA. Over residues 304-327 the composition is skewed to polar residues; sequence LENNNDNTAATSPPVPQQSQNIVQ. Residues 340 to 354 show a composition bias toward basic and acidic residues; the sequence is MDMHHPHMDIDLMRG.

Its subcellular location is the nucleus. In terms of biological role, transcription factor that specifically binds AT-rich DNA sequences related to the nuclear matrix attachment regions (MARs). This is AT-hook motif nuclear-localized protein 11 from Arabidopsis thaliana (Mouse-ear cress).